The primary structure comprises 206 residues: Oligoribonuclease (206 aa).

The 164-residue stretch at 20–183 (LVWLDMEMTG…ADIHESIDEL (164 aa)) folds into the Exonuclease domain. The active site involves Tyr-141.

The protein belongs to the oligoribonuclease family.

The protein resides in the cytoplasm. Its function is as follows. 3'-to-5' exoribonuclease specific for small oligoribonucleotides. The polypeptide is Oligoribonuclease (Burkholderia lata (strain ATCC 17760 / DSM 23089 / LMG 22485 / NCIMB 9086 / R18194 / 383)).